The primary structure comprises 450 residues: Carbamoyl phosphate synthase arginine-specific small chain (450 aa).

The transit peptide at 1 to 29 (MFAARLFKAMPARASAFPSVNASIQSRFM) directs the protein to the mitochondrion. A Glutamine amidotransferase type-1 domain is found at 220 to 407 (HVAVIDCGVK…LDSVRKYKAS (188 aa)). Cys-296 serves as the catalytic Nucleophile. Residues His-380 and Glu-382 contribute to the active site.

Belongs to the CarA family. Heterodimer composed of 2 chains; the small (or glutamine) chain promotes the hydrolysis of glutamine to ammonia, which is used by the large (or ammonia) chain to synthesize carbamoyl phosphate.

The protein resides in the mitochondrion matrix. It carries out the reaction hydrogencarbonate + L-glutamine + 2 ATP + H2O = carbamoyl phosphate + L-glutamate + 2 ADP + phosphate + 2 H(+). It catalyses the reaction L-glutamine + H2O = L-glutamate + NH4(+). The protein operates within amino-acid biosynthesis; L-arginine biosynthesis; carbamoyl phosphate from bicarbonate: step 1/1. Small subunit of the arginine-specific carbamoyl phosphate synthase (CPSase). CPSase catalyzes the formation of carbamoyl phosphate from the ammonia moiety of glutamine, carbonate, and phosphate donated by ATP, the first step of the arginine biosynthetic pathway. The small subunit (glutamine amidotransferase) binds and cleaves glutamine to supply the large subunit with the substrate ammonia. The sequence is that of Carbamoyl phosphate synthase arginine-specific small chain (cpa1) from Aspergillus oryzae (strain ATCC 42149 / RIB 40) (Yellow koji mold).